The chain runs to 130 residues: UPF0251 protein MmarC7_1642 (130 aa).

The protein belongs to the UPF0251 family.

This Methanococcus maripaludis (strain C7 / ATCC BAA-1331) protein is UPF0251 protein MmarC7_1642.